We begin with the raw amino-acid sequence, 60 residues long: Alpha-conotoxin-like 289 (60 aa).

An N-terminal signal peptide occupies residues 1–16 (MFTVFLLVVLATTVVS). Positions 17-42 (FTSDRAFRGRNAAAKASGLVGLTDKR) are excised as a propeptide. The residue at position 43 (glutamine 43) is a Pyrrolidone carboxylic acid. 2 disulfides stabilise this stretch: cysteine 45–cysteine 51 and cysteine 46–cysteine 59. The ser-Xaa-Pro motif, crucial for potent interaction with nAChR stretch occupies residues 47 to 49 (SYP). Cysteine 59 carries the cysteine amide modification.

The protein belongs to the conotoxin A superfamily. In terms of tissue distribution, expressed by the venom duct.

It is found in the secreted. Its function is as follows. Alpha-conotoxins act on postsynaptic membranes, they bind to the nicotinic acetylcholine receptors (nAChR) and thus inhibit them. This is Alpha-conotoxin-like 289 from Conus ammiralis (Admiral cone).